A 184-amino-acid polypeptide reads, in one-letter code: Adenine phosphoribosyltransferase (184 aa).

This sequence belongs to the purine/pyrimidine phosphoribosyltransferase family. As to quaternary structure, homodimer.

It localises to the cytoplasm. It carries out the reaction AMP + diphosphate = 5-phospho-alpha-D-ribose 1-diphosphate + adenine. Its pathway is purine metabolism; AMP biosynthesis via salvage pathway; AMP from adenine: step 1/1. Functionally, catalyzes a salvage reaction resulting in the formation of AMP, that is energically less costly than de novo synthesis. This is Adenine phosphoribosyltransferase from Parafrankia sp. (strain EAN1pec).